A 272-amino-acid chain; its full sequence is Ribosomal RNA small subunit methyltransferase A (272 aa).

S-adenosyl-L-methionine-binding residues include Asn-15, Ile-17, Gly-42, Glu-64, Asp-90, and Asn-109.

Belongs to the class I-like SAM-binding methyltransferase superfamily. rRNA adenine N(6)-methyltransferase family. RsmA subfamily.

It localises to the cytoplasm. The enzyme catalyses adenosine(1518)/adenosine(1519) in 16S rRNA + 4 S-adenosyl-L-methionine = N(6)-dimethyladenosine(1518)/N(6)-dimethyladenosine(1519) in 16S rRNA + 4 S-adenosyl-L-homocysteine + 4 H(+). Specifically dimethylates two adjacent adenosines (A1518 and A1519) in the loop of a conserved hairpin near the 3'-end of 16S rRNA in the 30S particle. May play a critical role in biogenesis of 30S subunits. The chain is Ribosomal RNA small subunit methyltransferase A from Wolbachia sp. subsp. Drosophila simulans (strain wRi).